The chain runs to 446 residues: tRNA modification GTPase MnmE (446 aa).

(6S)-5-formyl-5,6,7,8-tetrahydrofolate-binding residues include arginine 24, glutamate 81, and lysine 120. The region spanning glycine 216–leucine 368 is the TrmE-type G domain. A K(+)-binding site is contributed by asparagine 226. GTP-binding positions include asparagine 226–serine 231, threonine 245–threonine 251, and aspartate 270–glycine 273. A Mg(2+)-binding site is contributed by serine 230. Threonine 245, valine 247, and threonine 250 together coordinate K(+). Threonine 251 is a Mg(2+) binding site. Lysine 446 provides a ligand contact to (6S)-5-formyl-5,6,7,8-tetrahydrofolate.

The protein belongs to the TRAFAC class TrmE-Era-EngA-EngB-Septin-like GTPase superfamily. TrmE GTPase family. As to quaternary structure, homodimer. Heterotetramer of two MnmE and two MnmG subunits. The cofactor is K(+).

Its subcellular location is the cytoplasm. Functionally, exhibits a very high intrinsic GTPase hydrolysis rate. Involved in the addition of a carboxymethylaminomethyl (cmnm) group at the wobble position (U34) of certain tRNAs, forming tRNA-cmnm(5)s(2)U34. The chain is tRNA modification GTPase MnmE from Xanthomonas oryzae pv. oryzae (strain PXO99A).